Consider the following 215-residue polypeptide: 5'-deoxynucleotidase YGK1 (215 aa).

An HD domain is found at 58 to 164 (ISDHMYRMGL…VKDIDKYEML (107 aa)). A divalent metal cation-binding residues include H61, H89, D90, E93, D98, I99, and D159.

This sequence belongs to the HDDC2 family. Homodimer. Requires Mn(2+) as cofactor. Co(2+) is required as a cofactor. It depends on Mg(2+) as a cofactor.

The enzyme catalyses a 2'-deoxyribonucleoside 5'-phosphate + H2O = a 2'-deoxyribonucleoside + phosphate. Catalyzes the dephosphorylation of the nucleoside 5'-monophosphates deoxyadenosine monophosphate (dAMP), deoxycytidine monophosphate (dCMP), deoxyguanosine monophosphate (dGMP) and deoxythymidine monophosphate (dTMP). The polypeptide is 5'-deoxynucleotidase YGK1 (Saccharomyces cerevisiae (strain ATCC 204508 / S288c) (Baker's yeast)).